The following is a 702-amino-acid chain: Exodeoxyribonuclease 1 (702 aa).

The tract at residues 1–96 (MGIQGLLPQL…STESKRRDKR (96 aa)) is N-domain. Residues D30, D78, E150, D152, D171, D173, and D227 each coordinate Mg(2+). The tract at residues 114–247 (NAMDYFQKCV…ITAMKLVRRF (134 aa)) is I-domain. S372 bears the Phosphoserine mark. Disordered stretches follow at residues 465-571 (SIQD…SQRS) and 660-685 (SFNS…SQAR). The segment covering 474–498 (NSQSLEEPVSESQLSTQIPSSFITT) has biased composition (polar residues). Acidic residues-rich tracts occupy residues 500-518 (LEDD…SDIE) and 535-550 (NTDD…DYSE). Positions 558–571 (TSSTTSFPGSSQRS) are enriched in low complexity. Residues 667–678 (LHEESKKRDIET) are compositionally biased toward basic and acidic residues.

It belongs to the XPG/RAD2 endonuclease family. EXO1 subfamily. In terms of assembly, interacts with mismatch repair protein MSH2. Mg(2+) serves as cofactor.

The protein localises to the nucleus. Inactivated by calcium and zinc ions. 5'-&gt;3' double-stranded DNA exonuclease involved in mismatch repair and eventually also in mitotic recombination between direct repeats. Also has a minor role in the correction of large DNA mismatches that occur in the heteroduplex DNA during meiotic recombination at the HIS4 locus. The sequence is that of Exodeoxyribonuclease 1 (EXO1) from Saccharomyces cerevisiae (strain ATCC 204508 / S288c) (Baker's yeast).